A 202-amino-acid chain; its full sequence is CASP-like protein 2U7 (202 aa).

The Cytoplasmic portion of the chain corresponds to 1-10 (MLELYEKRRA). The helical transmembrane segment at 11–31 (LLLLRLAAMFLSLAALLITVL) threads the bilayer. Residues 32-64 (NREDGFFSINVFGSPQPILTKATADFTLVKGLK) are Extracellular-facing. Residues 65–85 (FFAGAMGIVAGYSFLQLAIAM) traverse the membrane as a helical segment. Residues 86-101 (ASMFSGAPSILGGKRM) are Cytoplasmic-facing. The helical transmembrane segment at 102 to 122 (AWLCFVGDMTASHLCAAAAAV) threads the bilayer. At 123 to 148 (SAQLAYLGKRGAPMWSAVCTYFSHYC) the chain is on the extracellular side. The chain crosses the membrane as a helical span at residues 149 to 169 (LVFGLAVIFAFLATLAALLVA). The Cytoplasmic segment spans residues 170-202 (SISSYHLFRLHGILQQQQQQRRQLQQEHVQDKP).

Belongs to the Casparian strip membrane proteins (CASP) family. As to quaternary structure, homodimer and heterodimers.

Its subcellular location is the cell membrane. This is CASP-like protein 2U7 from Selaginella moellendorffii (Spikemoss).